A 430-amino-acid chain; its full sequence is Adenylosuccinate synthetase (430 aa).

GTP is bound by residues 12–18 and 40–42; these read GDEGKGK and GHT. D13 serves as the catalytic Proton acceptor. Mg(2+)-binding residues include D13 and G40. Residues 13–16, 38–41, T130, R144, Q225, T240, and R304 each bind IMP; these read DEGK and NAGH. The active-site Proton donor is H41. 300–306 contacts substrate; the sequence is STTGRPR. GTP-binding positions include R306, 332–334, and 414–416; these read KLD and SVG.

Belongs to the adenylosuccinate synthetase family. In terms of assembly, homodimer. It depends on Mg(2+) as a cofactor.

The protein resides in the cytoplasm. It catalyses the reaction IMP + L-aspartate + GTP = N(6)-(1,2-dicarboxyethyl)-AMP + GDP + phosphate + 2 H(+). It functions in the pathway purine metabolism; AMP biosynthesis via de novo pathway; AMP from IMP: step 1/2. In terms of biological role, plays an important role in the de novo pathway of purine nucleotide biosynthesis. Catalyzes the first committed step in the biosynthesis of AMP from IMP. The polypeptide is Adenylosuccinate synthetase (Pelobacter propionicus (strain DSM 2379 / NBRC 103807 / OttBd1)).